We begin with the raw amino-acid sequence, 233 residues long: Protein Mis18-alpha (233 aa).

A phosphoserine mark is found at Ser36, Ser39, and Ser40. One can recognise a Mis18 domain in the interval 80–178 (PLVFLCSGCR…SVEAIESYVL (99 aa)). Cys85, Cys88, Cys141, and Cys144 together coordinate Zn(2+). Residue Lys162 forms a Glycyl lysine isopeptide (Lys-Gly) (interchain with G-Cter in SUMO2) linkage. Ser233 bears the Phosphoserine mark.

This sequence belongs to the mis18 family. In terms of assembly, homodimer, and heterodimer with OIP5/MIS18B. Identified in a complex containing MIS18A, OIP5/MIS18B, MIS18BP1, RBBP7 and RBBP4. In terms of tissue distribution, detected in testis.

Its subcellular location is the nucleus. It localises to the chromosome. It is found in the centromere. Required for recruitment of CENPA to centromeres and normal chromosome segregation during mitosis. The sequence is that of Protein Mis18-alpha (MIS18A) from Homo sapiens (Human).